We begin with the raw amino-acid sequence, 29 residues long: Galanin (29 aa).

Position 29 is an alanine amide (Ala29).

This sequence belongs to the galanin family.

It is found in the secreted. Functionally, contracts smooth muscle of the gastrointestinal and genitourinary tract, regulates growth hormone release, modulates insulin release, and may be involved in the control of adrenal secretion. This is Galanin (gal) from Amia calva (Bowfin).